The primary structure comprises 213 residues: Major fimbrial subunit (213 aa).

Positions 1–20 (MKKTLLGSLILLAFAGNVQA) are cleaved as a signal peptide. Cys-41 and Cys-81 are joined by a disulfide.

It belongs to the fimbrial protein family.

Its subcellular location is the fimbrium. Its function is as follows. Mediates adherence to oropharyngeal epithelial cells. Helps the airway colonization process. The polypeptide is Major fimbrial subunit (hifA) (Haemophilus influenzae).